The primary structure comprises 656 residues: Threonine--tRNA ligase (656 aa).

Residues 1-63 form the TGS domain; the sequence is MAEIQLTFPD…LEDGAIEIIT (63 aa). Residues 243–541 are catalytic; the sequence is DHRVIGNQLD…LTEIYKGAFP (299 aa). 3 residues coordinate Zn(2+): Cys337, His388, and His518.

Belongs to the class-II aminoacyl-tRNA synthetase family. As to quaternary structure, homodimer. It depends on Zn(2+) as a cofactor.

It is found in the cytoplasm. The enzyme catalyses tRNA(Thr) + L-threonine + ATP = L-threonyl-tRNA(Thr) + AMP + diphosphate + H(+). Catalyzes the attachment of threonine to tRNA(Thr) in a two-step reaction: L-threonine is first activated by ATP to form Thr-AMP and then transferred to the acceptor end of tRNA(Thr). Also edits incorrectly charged L-seryl-tRNA(Thr). This Latilactobacillus sakei subsp. sakei (strain 23K) (Lactobacillus sakei subsp. sakei) protein is Threonine--tRNA ligase.